We begin with the raw amino-acid sequence, 126 residues long: Large ribosomal subunit protein bL12 (126 aa).

It belongs to the bacterial ribosomal protein bL12 family. As to quaternary structure, homodimer. Part of the ribosomal stalk of the 50S ribosomal subunit. Forms a multimeric L10(L12)X complex, where L10 forms an elongated spine to which 2 to 4 L12 dimers bind in a sequential fashion. Binds GTP-bound translation factors.

In terms of biological role, forms part of the ribosomal stalk which helps the ribosome interact with GTP-bound translation factors. Is thus essential for accurate translation. This is Large ribosomal subunit protein bL12 from Trichlorobacter lovleyi (strain ATCC BAA-1151 / DSM 17278 / SZ) (Geobacter lovleyi).